The chain runs to 382 residues: 3-isopropylmalate dehydrogenase (382 aa).

Residue 91–102 (GPKWGTGSVRPE) coordinates NAD(+). The substrate site is built by Arg109, Arg119, Arg148, and Asp240. Asp240, Asp265, and Asp269 together coordinate Mg(2+). 304 to 315 (GSAPDLTENKVN) is an NAD(+) binding site.

The protein belongs to the isocitrate and isopropylmalate dehydrogenases family. Homodimer. Mg(2+) is required as a cofactor. Requires Mn(2+) as cofactor.

It is found in the cytoplasm. The enzyme catalyses (2R,3S)-3-isopropylmalate + NAD(+) = 4-methyl-2-oxopentanoate + CO2 + NADH. It participates in amino-acid biosynthesis; L-leucine biosynthesis; L-leucine from 3-methyl-2-oxobutanoate: step 3/4. Its function is as follows. Catalyzes the oxidation of 3-carboxy-2-hydroxy-4-methylpentanoate (3-isopropylmalate) to 3-carboxy-4-methyl-2-oxopentanoate. The product decarboxylates to 4-methyl-2 oxopentanoate. The protein is 3-isopropylmalate dehydrogenase (LEU2) of Debaryomyces hansenii (strain ATCC 36239 / CBS 767 / BCRC 21394 / JCM 1990 / NBRC 0083 / IGC 2968) (Yeast).